The following is a 274-amino-acid chain: Large ribosomal subunit protein uL2 (274 aa).

Disordered regions lie at residues 28 to 55 (APHA…RHVG) and 224 to 274 (VAMN…RRRK). The segment covering 263 to 274 (KRTDKMIVRRRK) has biased composition (basic and acidic residues).

The protein belongs to the universal ribosomal protein uL2 family. As to quaternary structure, part of the 50S ribosomal subunit. Forms a bridge to the 30S subunit in the 70S ribosome.

One of the primary rRNA binding proteins. Required for association of the 30S and 50S subunits to form the 70S ribosome, for tRNA binding and peptide bond formation. It has been suggested to have peptidyltransferase activity; this is somewhat controversial. Makes several contacts with the 16S rRNA in the 70S ribosome. In Pseudomonas fluorescens (strain ATCC BAA-477 / NRRL B-23932 / Pf-5), this protein is Large ribosomal subunit protein uL2.